The primary structure comprises 511 residues: Phospho-2-dehydro-3-deoxyheptonate aldolase 1, chloroplastic (511 aa).

The N-terminal 49 residues, 1 to 49 (MALSNTLSLSSSKSLVQSHLLHNPTPQPRFSLFPTTQHGRRHPISAVHA), are a transit peptide targeting the chloroplast.

The protein belongs to the class-II DAHP synthase family. As to expression, higher levels seen in the cotyledons than in the leaves and flowers. Lower levels seen in the roots and stems.

The protein resides in the plastid. It is found in the chloroplast. It catalyses the reaction D-erythrose 4-phosphate + phosphoenolpyruvate + H2O = 7-phospho-2-dehydro-3-deoxy-D-arabino-heptonate + phosphate. The protein operates within metabolic intermediate biosynthesis; chorismate biosynthesis; chorismate from D-erythrose 4-phosphate and phosphoenolpyruvate: step 1/7. Functionally, may be involved in the synthesis of secondary metabolites derived from intermediates of the pre-chorismate pathway up to shikimate. This chain is Phospho-2-dehydro-3-deoxyheptonate aldolase 1, chloroplastic, found in Solanum lycopersicum (Tomato).